A 957-amino-acid polypeptide reads, in one-letter code: Glycine dehydrogenase (decarboxylating) (957 aa).

Lysine 708 is subject to N6-(pyridoxal phosphate)lysine.

Belongs to the GcvP family. In terms of assembly, the glycine cleavage system is composed of four proteins: P, T, L and H. Requires pyridoxal 5'-phosphate as cofactor.

It carries out the reaction N(6)-[(R)-lipoyl]-L-lysyl-[glycine-cleavage complex H protein] + glycine + H(+) = N(6)-[(R)-S(8)-aminomethyldihydrolipoyl]-L-lysyl-[glycine-cleavage complex H protein] + CO2. In terms of biological role, the glycine cleavage system catalyzes the degradation of glycine. The P protein binds the alpha-amino group of glycine through its pyridoxal phosphate cofactor; CO(2) is released and the remaining methylamine moiety is then transferred to the lipoamide cofactor of the H protein. The polypeptide is Glycine dehydrogenase (decarboxylating) (Escherichia coli O1:K1 / APEC).